The chain runs to 417 residues: Phosphoglycerate kinase (417 aa).

Residues Val23, Asp24, Phe25, Asn26, Gln39, Arg40, Ser63, His64, Gly66, Arg67, Leu122, Arg123, His170, and Arg171 each contribute to the (2R)-3-phosphoglycerate site. Gly214 contacts ADP. A CDP-binding site is contributed by Gly214. The AMP site is built by Ala215 and Lys216. Ala215 contributes to the ATP binding site. A Mg(2+)-binding site is contributed by Ala215. Asp219 serves as a coordination point for CDP. Asp219 is a Mg(2+) binding site. Residue Lys220 participates in AMP binding. Lys220 contacts ATP. Gly238 provides a ligand contact to ADP. Gly238 contacts CDP. AMP is bound by residues Ala239 and Gly313. 2 residues coordinate ATP: Ala239 and Gly313. CDP is bound by residues Gly338 and Phe343. Phe343 contacts ADP. Glu344 contacts AMP. ATP is bound by residues Glu344, Asp375, and Thr376. Residue Asp375 coordinates Mg(2+).

This sequence belongs to the phosphoglycerate kinase family. In terms of assembly, monomer. It depends on Mg(2+) as a cofactor.

The protein localises to the cytoplasm. It localises to the mitochondrion. The catalysed reaction is (2R)-3-phosphoglycerate + ATP = (2R)-3-phospho-glyceroyl phosphate + ADP. It participates in carbohydrate degradation; glycolysis; pyruvate from D-glyceraldehyde 3-phosphate: step 2/5. Catalyzes one of the two ATP producing reactions in the glycolytic pathway via the reversible conversion of 1,3-diphosphoglycerate to 3-phosphoglycerate. Both L- and D- forms of purine and pyrimidine nucleotides can be used as substrates, but the activity is much lower on pyrimidines. Negatively regulates the biosynthesis of acetyl-CoA from pyruvate in the mitochondrion. In Aspergillus oryzae (strain ATCC 42149 / RIB 40) (Yellow koji mold), this protein is Phosphoglycerate kinase (pgkA).